The following is a 328-amino-acid chain: Malate dehydrogenase 1 (328 aa).

An NAD(+)-binding site is contributed by 12–18 (GAAGQIG). Substrate-binding residues include arginine 95 and arginine 101. NAD(+)-binding positions include asparagine 108, glutamine 115, and 132 to 134 (VGN). Residues asparagine 134 and arginine 165 each contribute to the substrate site. Histidine 190 (proton acceptor) is an active-site residue.

It belongs to the LDH/MDH superfamily. MDH type 2 family.

It carries out the reaction (S)-malate + NAD(+) = oxaloacetate + NADH + H(+). Its function is as follows. Catalyzes the reversible oxidation of malate to oxaloacetate. The polypeptide is Malate dehydrogenase 1 (Albidiferax ferrireducens (strain ATCC BAA-621 / DSM 15236 / T118) (Rhodoferax ferrireducens)).